The primary structure comprises 578 residues: MTNPITHYIGSFIDEFALSGVTDAVVCPGSRSTPLAVLAAAHPDIQVHIQIDERSAGFFALGLAKARQRPVMLICTSGTAAANFYPAVIEAHYSRVPLIVLTADRPHELREVGAPQAINQHFLFGNFVKFFTDSALPEENPQMLSYIRTLAGRAVSEAGKRPMGPVHINVPLREPLMPDLSAAPFERMRKGRHVSVTTGIQSADQDSLCHITERLAGTERGMIVCGEIHGEAEKQQIIALAEMLQFPILADPLSNLRNGKHDKTLIIDAYDSFLKDEAIKEALRPDAVIRFGPMPVSKPLFLWLRDDPAIEQFIVDEDGGWRDPTQAGAHMIHCHPSVFLEAVRSAETGKRPSGWLEKWQFVNERFRSHLQAASMDDLSFEGNVYRQLQHLVPEGSSIFVGNSMPIRDVDTFFEKQDRSFRVYANRGANGIDGVVSSAMGLCEGTKAPVTLVIGDLSFYHDLNGLLAAKKLGIPLTVILINNDGGGIFSFLPQASDKTHFEELFGTPTGLDFRHAAALYGGTYTCPETWEAFKDAYQPQADKPGLHIIELKTDRTSRVQFHRDLLQAAVREVKKEWKL.

The protein belongs to the TPP enzyme family. MenD subfamily. In terms of assembly, homodimer. It depends on Mg(2+) as a cofactor. Requires Mn(2+) as cofactor. Thiamine diphosphate serves as cofactor.

It carries out the reaction isochorismate + 2-oxoglutarate + H(+) = 5-enolpyruvoyl-6-hydroxy-2-succinyl-cyclohex-3-ene-1-carboxylate + CO2. It functions in the pathway quinol/quinone metabolism; 1,4-dihydroxy-2-naphthoate biosynthesis; 1,4-dihydroxy-2-naphthoate from chorismate: step 2/7. It participates in quinol/quinone metabolism; menaquinone biosynthesis. Functionally, catalyzes the thiamine diphosphate-dependent decarboxylation of 2-oxoglutarate and the subsequent addition of the resulting succinic semialdehyde-thiamine pyrophosphate anion to isochorismate to yield 2-succinyl-5-enolpyruvyl-6-hydroxy-3-cyclohexene-1-carboxylate (SEPHCHC). The sequence is that of 2-succinyl-5-enolpyruvyl-6-hydroxy-3-cyclohexene-1-carboxylate synthase from Bacillus velezensis (strain DSM 23117 / BGSC 10A6 / LMG 26770 / FZB42) (Bacillus amyloliquefaciens subsp. plantarum).